The primary structure comprises 251 residues: Triosephosphate isomerase (251 aa).

A substrate-binding site is contributed by 9-11 (NWK). Residue histidine 96 is the Electrophile of the active site. Catalysis depends on glutamate 166, which acts as the Proton acceptor. Residues glycine 172, serine 212, and 233-234 (GG) each bind substrate.

It belongs to the triosephosphate isomerase family. Homodimer.

Its subcellular location is the cytoplasm. The catalysed reaction is D-glyceraldehyde 3-phosphate = dihydroxyacetone phosphate. The protein operates within carbohydrate biosynthesis; gluconeogenesis. Its pathway is carbohydrate degradation; glycolysis; D-glyceraldehyde 3-phosphate from glycerone phosphate: step 1/1. Involved in the gluconeogenesis. Catalyzes stereospecifically the conversion of dihydroxyacetone phosphate (DHAP) to D-glyceraldehyde-3-phosphate (G3P). The chain is Triosephosphate isomerase from Pelodictyon phaeoclathratiforme (strain DSM 5477 / BU-1).